We begin with the raw amino-acid sequence, 317 residues long: HTH-type transcriptional regulator MetR (317 aa).

The 59-residue stretch at 1 to 59 (MIEVKHLKTLQALRNCGSLAAAAATLHQTQSALSHQFSDLEQRLGFRLFVRKSQPLRFT) folds into the HTH lysR-type domain. The H-T-H motif DNA-binding region spans 19–38 (LAAAAATLHQTQSALSHQFS).

This sequence belongs to the LysR transcriptional regulatory family.

The protein localises to the cytoplasm. Functionally, control of the last step in methionine biosynthesis; MetR is a positive activator of the metA, metE and metH genes. It is also a negative regulator of its own expression. This is HTH-type transcriptional regulator MetR (metR) from Escherichia coli O157:H7.